The primary structure comprises 347 residues: Integrin beta-1-binding protein 2 (347 aa).

Residues Cys5, Cys10, Cys24, and His27 each coordinate Zn(2+). Residues 5 to 64 form the CHORD 1 domain; the sequence is CRNKGCGQHFDPNTNLPDSCCHHPGVPIFHDALKGWSCCRKRTVDFSEFLNIKGCTMGPH. The short motif at 28-31 is the SH3-binding element; the sequence is PGVP. The Zn(2+) site is built by Cys42, Cys43, Cys59, and His64. The short motif at 70-78 is the SH3-binding element; that stretch reads PEAPQPEGP. 2 residues coordinate Zn(2+): Cys149 and Cys154. The 60-residue stretch at 149-208 folds into the CHORD 2 domain; it reads CQNPGCDAVYQGPESDATPCTYHPGAPRFHEGMKSWSCCGIQTLDFGAFLAQPGCRVGRH. Residues 158–161 carry the SH2-binding motif; sequence YQGP. 2 residues coordinate Zn(2+): Cys168 and His171. The short motif at 172–175 is the SH3-binding element; it reads PGAP. 4 residues coordinate Zn(2+): Cys186, Cys187, Cys203, and His208. The CS domain maps to 215-304; that stretch reads PASCRHDWHQ…ADPGSWAQLE (90 aa). The short motif at 234-237 is the SH2-binding element; sequence YGQI. The disordered stretch occupies residues 319–347; sequence LEMDEEESDDSDDDLSWTEEEEEEEAMGE. A compositionally biased stretch (acidic residues) spans 320 to 347; that stretch reads EMDEEESDDSDDDLSWTEEEEEEEAMGE.

As to quaternary structure, interacts with beta-1 integrin subunit. This interaction is regulated by divalent cations, and it occurs only in absence of calcium. In terms of tissue distribution, expressed in skeletal and cardiac muscles but not in other tissues.

May play a role during maturation and/or organization of muscles cells. The chain is Integrin beta-1-binding protein 2 (ITGB1BP2) from Homo sapiens (Human).